The following is a 628-amino-acid chain: Carbon monoxide dehydrogenase 1 (628 aa).

Residues Cys-44, Cys-52, Cys-53, Cys-56, Cys-61, and Cys-75 each coordinate [4Fe-4S] cluster. Positions 266, 302, 340, 448, 478, and 519 each coordinate [Ni-4Fe-5S] cluster.

This sequence belongs to the Ni-containing carbon monoxide dehydrogenase family. As to quaternary structure, homodimer. [4Fe-4S] cluster is required as a cofactor. Requires [Ni-4Fe-5S] cluster as cofactor.

It carries out the reaction CO + 2 oxidized [2Fe-2S]-[ferredoxin] + H2O = 2 reduced [2Fe-2S]-[ferredoxin] + CO2 + 2 H(+). Functionally, CODH oxidizes carbon monoxide coupled, via CooF, to the reduction of a hydrogen cation by a hydrogenase (possibly CooH). The polypeptide is Carbon monoxide dehydrogenase 1 (cooS1) (Methanosarcina acetivorans (strain ATCC 35395 / DSM 2834 / JCM 12185 / C2A)).